A 194-amino-acid chain; its full sequence is Leucyl/phenylalanyl-tRNA--protein transferase (194 aa).

Belongs to the L/F-transferase family.

Its subcellular location is the cytoplasm. It catalyses the reaction N-terminal L-lysyl-[protein] + L-leucyl-tRNA(Leu) = N-terminal L-leucyl-L-lysyl-[protein] + tRNA(Leu) + H(+). The catalysed reaction is N-terminal L-arginyl-[protein] + L-leucyl-tRNA(Leu) = N-terminal L-leucyl-L-arginyl-[protein] + tRNA(Leu) + H(+). The enzyme catalyses L-phenylalanyl-tRNA(Phe) + an N-terminal L-alpha-aminoacyl-[protein] = an N-terminal L-phenylalanyl-L-alpha-aminoacyl-[protein] + tRNA(Phe). Its function is as follows. Functions in the N-end rule pathway of protein degradation where it conjugates Leu, Phe and, less efficiently, Met from aminoacyl-tRNAs to the N-termini of proteins containing an N-terminal arginine or lysine. The chain is Leucyl/phenylalanyl-tRNA--protein transferase from Pelodictyon phaeoclathratiforme (strain DSM 5477 / BU-1).